Here is a 542-residue protein sequence, read N- to C-terminus: Nibrin homolog (542 aa).

One can recognise an FHA domain in the interval tyrosine 25–glycine 90. The 77-residue stretch at isoleucine 119–methionine 195 folds into the BRCT domain. The disordered stretch occupies residues serine 409–aspartate 430. The segment at valine 465–valine 500 is involved in MRE11-binding.

It belongs to the Nibrin family. As to quaternary structure, component of the MRN complex composed of two heterodimers RAD50 and MRE11 associated with a single NBS1.

It localises to the nucleus. It is found in the chromosome. Its function is as follows. Component of the MRN complex, which plays a central role in double-strand break (DSB) repair, DNA recombination, maintenance of telomere integrity and meiosis. The MRN complex is involved in the repair of DNA double-strand breaks (DSBs) via homologous recombination (HR), an error-free mechanism which primarily occurs during S and G2 phases. The complex (1) mediates the end resection of damaged DNA, which generates proper single-stranded DNA, a key initial steps in HR, and is (2) required for the recruitment of other repair factors and efficient activation of ATM and ATR upon DNA damage. The MRN complex possesses single-strand endonuclease activity and double-strand-specific 3'-5' exonuclease activity, which are provided by MRE11, to initiate end resection, which is required for single-strand invasion and recombination. Within the MRN complex, NBS1 acts as a protein-protein adapter, which specifically recognizes and binds phosphorylated proteins, promoting their recruitment to DNA damage sites. Recruits MRE11 and RAD50 components of the MRN complex to DSBs in response to DNA damage. This chain is Nibrin homolog, found in Arabidopsis thaliana (Mouse-ear cress).